The sequence spans 436 residues: D-amino acid dehydrogenase (436 aa).

3-17 (ILILGSGVIGVTSAW) is a binding site for FAD.

It belongs to the DadA oxidoreductase family. It depends on FAD as a cofactor.

The catalysed reaction is a D-alpha-amino acid + A + H2O = a 2-oxocarboxylate + AH2 + NH4(+). Its pathway is amino-acid degradation; D-alanine degradation; NH(3) and pyruvate from D-alanine: step 1/1. Functionally, oxidative deamination of D-amino acids. The sequence is that of D-amino acid dehydrogenase from Photorhabdus laumondii subsp. laumondii (strain DSM 15139 / CIP 105565 / TT01) (Photorhabdus luminescens subsp. laumondii).